The primary structure comprises 810 residues: Transducer protein CosT (810 aa).

Residues 1–38 lie on the Cytoplasmic side of the membrane; the sequence is MSEPTADAGDNSPSSTDTAPLDRVKAIALLPLRSYLVK. The helical transmembrane segment at 39 to 59 threads the bilayer; it reads FAVALLVILVIIAAGGFWVQA. Residues 60-323 lie on the Extracellular side of the membrane; it reads DATATLEANT…AFALSNQIRT (264 aa). The helical transmembrane segment at 324-344 threads the bilayer; the sequence is GILGFILVALVGVVLVGGTIG. Residues 345–397 form the HAMP 1 domain; it reads RNTAAAVQSLSAAAAEIEAGNYDVDVASSRRDEIGQLFASIGSMRDALVTQID. Residues 345–810 lie on the Cytoplasmic side of the membrane; it reads RNTAAAVQSL…DRDVTPTQTD (466 aa). The interval 403–427 is disordered; sequence REQATEAQQDAEAERERAEDARERA. Basic and acidic residues predominate over residues 414 to 427; it reads EAERERAEDARERA. The HAMP 2 domain occupies 439 to 493; that stretch reads AELEAQAERYSDVMAACADGDLTRRMPADDTDNEAMAAIAASFNEMLAQWEHTII. A Methyl-accepting transducer domain is found at 512–748; the sequence is GAADAERASG…EAVSMTEEVA (237 aa). 2 positions are modified to glutamate methyl ester (Glu): Glu-556 and Glu-739. A disordered region spans residues 751–784; sequence SDSTAGEAQSVSAAAEEQAASMSEISDSVESLSG. Positions 755–774 are enriched in low complexity; the sequence is AGEAQSVSAAAEEQAASMSE. A compositionally biased stretch (polar residues) spans 775 to 784; that stretch reads ISDSVESLSG.

Belongs to the methyl-accepting chemotaxis (MCP) protein family. Post-translationally, methylated by CheR.

The protein resides in the cell membrane. Functionally, mediates chemotaxis towards compatible osmolytes. Probably transduces the signal from the substrate-binding protein CosB to the histidine kinase CheA. The chain is Transducer protein CosT (cosT) from Halobacterium salinarum (strain ATCC 700922 / JCM 11081 / NRC-1) (Halobacterium halobium).